The chain runs to 471 residues: Mannose-1-phosphate guanylyltransferase (471 aa).

It belongs to the mannose-6-phosphate isomerase type 2 family.

It carries out the reaction alpha-D-mannose 1-phosphate + GTP + H(+) = GDP-alpha-D-mannose + diphosphate. The protein operates within nucleotide-sugar biosynthesis; GDP-alpha-D-mannose biosynthesis; GDP-alpha-D-mannose from alpha-D-mannose 1-phosphate (GTP route): step 1/1. Its function is as follows. Involved in the biosynthesis of the K2 capsular polysaccharide biosynthesis. The polypeptide is Mannose-1-phosphate guanylyltransferase (manC) (Klebsiella pneumoniae).